Here is a 220-residue protein sequence, read N- to C-terminus: Vesicle-associated membrane protein 7 (220 aa).

Ala-2 is subject to N-acetylalanine. Over 2-188 (AILFAVVARG…ARAMCMKNIK (187 aa)) the chain is Cytoplasmic. A Longin domain is found at 7–110 (VVARGTTILA…AMNSEFSSVL (104 aa)). The region spanning 125-185 (KVMETQAQVD…RNLARAMCMK (61 aa)) is the v-SNARE coiled-coil homology domain. Phosphoserine occurs at positions 167 and 168. Residues 189–209 (LTIIIIIVSIVFIYIIVSLLC) form a helical; Anchor for type IV membrane protein membrane-spanning segment. The Vesicular segment spans residues 210 to 220 (GGFTWPNCVKK).

It belongs to the synaptobrevin family. In terms of assembly, component of the SNARE complex composed of STX4, SNAP23 and VAMP7 that binds SYT7 during lysosomal exocytosis. Component of the SNARE complex composed of STX7, STX8, VAMP7 and VTI1B that is required for heterotypic fusion of late endosomes with lysosomes. May interact with STX17. Interacts with PICALM. Interacts with RAB21.

The protein localises to the cytoplasmic vesicle. It is found in the secretory vesicle membrane. Its subcellular location is the golgi apparatus. It localises to the trans-Golgi network membrane. The protein resides in the late endosome membrane. The protein localises to the lysosome membrane. It is found in the endoplasmic reticulum membrane. Its subcellular location is the phagosome membrane. It localises to the synapse. The protein resides in the synaptosome. Its function is as follows. Involved in the targeting and/or fusion of transport vesicles to their target membrane during transport of proteins from the early endosome to the lysosome. Required for heterotypic fusion of late endosomes with lysosomes and homotypic lysosomal fusion. Required for calcium regulated lysosomal exocytosis. Involved in the export of chylomicrons from the endoplasmic reticulum to the cis Golgi. Required for exocytosis of mediators during eosinophil and neutrophil degranulation, and target cell killing by natural killer cells. Required for focal exocytosis of late endocytic vesicles during phagosome formation. The polypeptide is Vesicle-associated membrane protein 7 (Vamp7) (Mus musculus (Mouse)).